We begin with the raw amino-acid sequence, 443 residues long: Sperm-associated antigen 4 protein (443 aa).

Over residues Met1–Ser36 the composition is skewed to low complexity. Residues Met1–Gly107 are disordered. 2 helical membrane-spanning segments follow: residues Phe137 to Val157 and Phe168 to Leu188. Positions Thr203–Ala244 form a coiled coil. One can recognise an SUN domain in the interval Gly267–Thr427.

As to quaternary structure, self-associates. Interacts with ODF1. May associate with microtubules. Interacts with SUN3 and SYNE1; suggesting the formation of a spermatogenesis-specific LINC complex; a SUN domain-based heterotrimer of SPAG4 and SUN3 may associate with SYNE1. Interacts with SEPT12 and LMNB1; during spermatogenesis. Isoform 1 is testis specific and is exclusively expressed in spermatids.

It is found in the membrane. The protein localises to the cytoplasm. The protein resides in the cytoskeleton. Its subcellular location is the nucleus envelope. It localises to the nucleus inner membrane. It is found in the flagellum axoneme. Involved in spermatogenesis. Required for sperm head formation but not required to establish and maintain general polarity of the sperm head. Required for anchoring and organization of the manchette. Required for targeting of SUN3 and probably SYNE1 through a probable SUN1:SYNE3 LINC complex to the nuclear envelope and involved in accurate posterior sperm head localization of the complex. May anchor SUN3 the nuclear envelope. Involved in maintenance of the nuclear envelope integrity. May assist the organization and assembly of outer dense fibers (ODFs), a specific structure of the sperm tail. The polypeptide is Sperm-associated antigen 4 protein (Spag4) (Mus musculus (Mouse)).